A 354-amino-acid chain; its full sequence is S-adenosylmethionine:tRNA ribosyltransferase-isomerase (354 aa).

The protein belongs to the QueA family. In terms of assembly, monomer.

The protein localises to the cytoplasm. The catalysed reaction is 7-aminomethyl-7-carbaguanosine(34) in tRNA + S-adenosyl-L-methionine = epoxyqueuosine(34) in tRNA + adenine + L-methionine + 2 H(+). It participates in tRNA modification; tRNA-queuosine biosynthesis. Its function is as follows. Transfers and isomerizes the ribose moiety from AdoMet to the 7-aminomethyl group of 7-deazaguanine (preQ1-tRNA) to give epoxyqueuosine (oQ-tRNA). The polypeptide is S-adenosylmethionine:tRNA ribosyltransferase-isomerase (Azorhizobium caulinodans (strain ATCC 43989 / DSM 5975 / JCM 20966 / LMG 6465 / NBRC 14845 / NCIMB 13405 / ORS 571)).